Reading from the N-terminus, the 458-residue chain is Chondroitin hydrolase (458 aa).

Positions methionine 1 to glycine 22 are cleaved as a signal peptide. An EGF-like domain is found at asparagine 358 to glutamate 401. Cystine bridges form between cysteine 362–cysteine 373, cysteine 367–cysteine 389, and cysteine 391–cysteine 400.

It belongs to the glycosyl hydrolase 56 family.

Endo-beta-galactosaminidase that specifically hydrolyzes chondroitin, releasing GlcUA-beta-(1-&gt;3)-GalNAc-beta-(1-&gt;4)-GlcUA-beta-(1-&gt;3)-GalNAc as the main product. Also hydrolyzes to a lesser extent chondroitin sulfates (CS-A, CS-C) and hyaluronic acid. May regulate the function of chondroitin in cell division. The protein is Chondroitin hydrolase of Caenorhabditis elegans.